We begin with the raw amino-acid sequence, 310 residues long: MRTHDDTWDIRTSVGATAVMVAAARAVETSKPEPLIRDPYARMLVTNANAGVIWEAMLDQEMVAKVEAIDAETAATVEHMRSYQAVRTNFFDTYFADAVAAGIRQVVILASGLDSRAYRLDWPAGTTVYEIDQPQVLAYKSATLAENGVTPAAERREVAIDLRQDWPSALRAAGFDPSARTAWLAEGLLMYLPAEAQDRLFTQIGELSCAGSRIAAETAGNHADERREQMRERFRKVAQTLGLEQTIDVHELIYHDPDRAPLGQWLNEHGWRANAQNACDEMHRVGRWVEGVPMADDKQAYSDFVTAERL.

S-adenosyl-L-methionine contacts are provided by residues Asp132 and 161 to 162 (DL).

Belongs to the UPF0677 family.

Exhibits S-adenosyl-L-methionine-dependent methyltransferase activity. In Mycobacterium ulcerans (strain Agy99), this protein is Putative S-adenosyl-L-methionine-dependent methyltransferase MUL_4762.